The chain runs to 259 residues: UPF0246 protein PLES_14941 (259 aa).

This sequence belongs to the UPF0246 family.

This is UPF0246 protein PLES_14941 from Pseudomonas aeruginosa (strain LESB58).